A 416-amino-acid chain; its full sequence is Glutamyl-tRNA reductase (416 aa).

Substrate is bound by residues 49–52, S105, 110–112, and Q116; these read TCNR and EPQ. Residue C50 is the Nucleophile of the active site. Position 185-190 (185-190) interacts with NADP(+); that stretch reads GAGETI.

Belongs to the glutamyl-tRNA reductase family. Homodimer.

It carries out the reaction (S)-4-amino-5-oxopentanoate + tRNA(Glu) + NADP(+) = L-glutamyl-tRNA(Glu) + NADPH + H(+). The protein operates within porphyrin-containing compound metabolism; protoporphyrin-IX biosynthesis; 5-aminolevulinate from L-glutamyl-tRNA(Glu): step 1/2. Its function is as follows. Catalyzes the NADPH-dependent reduction of glutamyl-tRNA(Glu) to glutamate 1-semialdehyde (GSA). The polypeptide is Glutamyl-tRNA reductase (Shewanella putrefaciens (strain CN-32 / ATCC BAA-453)).